The chain runs to 276 residues: Tryptophan synthase alpha chain (276 aa).

Residues Glu-49 and Asp-60 each act as proton acceptor in the active site.

Belongs to the TrpA family. In terms of assembly, tetramer of two alpha and two beta chains.

The enzyme catalyses (1S,2R)-1-C-(indol-3-yl)glycerol 3-phosphate + L-serine = D-glyceraldehyde 3-phosphate + L-tryptophan + H2O. Its pathway is amino-acid biosynthesis; L-tryptophan biosynthesis; L-tryptophan from chorismate: step 5/5. Functionally, the alpha subunit is responsible for the aldol cleavage of indoleglycerol phosphate to indole and glyceraldehyde 3-phosphate. The sequence is that of Tryptophan synthase alpha chain from Acidiphilium cryptum (strain JF-5).